We begin with the raw amino-acid sequence, 100 residues long: Putative pterin-4-alpha-carbinolamine dehydratase 2 (100 aa).

The protein belongs to the pterin-4-alpha-carbinolamine dehydratase family.

It carries out the reaction (4aS,6R)-4a-hydroxy-L-erythro-5,6,7,8-tetrahydrobiopterin = (6R)-L-erythro-6,7-dihydrobiopterin + H2O. The sequence is that of Putative pterin-4-alpha-carbinolamine dehydratase 2 from Cupriavidus pinatubonensis (strain JMP 134 / LMG 1197) (Cupriavidus necator (strain JMP 134)).